Consider the following 106-residue polypeptide: Large ribosomal subunit protein uL24 (106 aa).

Belongs to the universal ribosomal protein uL24 family. As to quaternary structure, part of the 50S ribosomal subunit.

Its function is as follows. One of two assembly initiator proteins, it binds directly to the 5'-end of the 23S rRNA, where it nucleates assembly of the 50S subunit. One of the proteins that surrounds the polypeptide exit tunnel on the outside of the subunit. This is Large ribosomal subunit protein uL24 from Spiroplasma kunkelii.